The primary structure comprises 339 residues: Anthranilate phosphoribosyltransferase (339 aa).

Residues G79, 82–83 (GD), S87, 89–92 (NIST), 107–115 (KHGNRSISS), and S119 contribute to the 5-phospho-alpha-D-ribose 1-diphosphate site. G79 is a binding site for anthranilate. Residue S91 participates in Mg(2+) binding. N110 serves as a coordination point for anthranilate. An anthranilate-binding site is contributed by R165. Positions 224 and 225 each coordinate Mg(2+).

It belongs to the anthranilate phosphoribosyltransferase family. Homodimer. The cofactor is Mg(2+).

It catalyses the reaction N-(5-phospho-beta-D-ribosyl)anthranilate + diphosphate = 5-phospho-alpha-D-ribose 1-diphosphate + anthranilate. Its pathway is amino-acid biosynthesis; L-tryptophan biosynthesis; L-tryptophan from chorismate: step 2/5. Functionally, catalyzes the transfer of the phosphoribosyl group of 5-phosphorylribose-1-pyrophosphate (PRPP) to anthranilate to yield N-(5'-phosphoribosyl)-anthranilate (PRA). This is Anthranilate phosphoribosyltransferase from Listeria welshimeri serovar 6b (strain ATCC 35897 / DSM 20650 / CCUG 15529 / CIP 8149 / NCTC 11857 / SLCC 5334 / V8).